Consider the following 292-residue polypeptide: MGSKETKNTSRRDFLIKGAGAAALGAGAFAISQVPLLEKLASANEDTVKDLLPFPELIESDEIIIRMQNDVRRALKKPLNEIQWIMVIDLKKCVGCSSCTVACVSENVLPPGVVYRPVIEEEIGTFPNVTKKFTPRPCMQCEHPPCTKVCPIGATYKSEDGIVAIDYDKCIGCRYCITACPYGARTFDWGEYHTENTPEIMQYEKEPNYEYGVERVREKKNSPIGNARKCHFCKHRLHKGMLSMCVTTCIGRATYIGDKNDPESLVAELIASPRVMRLKEELGTEPNVYYLT.

The tat-type signal signal peptide spans 1–43 (MGSKETKNTSRRDFLIKGAGAAALGAGAFAISQVPLLEKLASA). 4Fe-4S ferredoxin-type domains are found at residues 84–113 (WIMV…PPGV), 129–160 (VTKK…KSED), and 161–190 (GIVA…FDWG). The [4Fe-4S] cluster site is built by C93, C96, C99, C103, C138, C141, C146, C150, C170, C173, C176, C180, C230, C233, C245, and C249.

In terms of assembly, the complex is composed of three subunits: SrdA, SrdB and SrdC. It depends on [4Fe-4S] cluster as a cofactor. Predicted to be exported by the Tat system. The position of the signal peptide cleavage has not been experimentally proven.

It localises to the secreted. The catalysed reaction is selenite + a quinone + H2O = selenate + a quinol. Its function is as follows. Component of the respiratory selenate reductase complex, which catalyzes the reduction of selenate to selenite. This subunit probably transfers electrons from SrdC to SrdA. This Mesobacillus selenatarsenatis (strain DSM 18680 / JCM 14380 / FERM P-15431 / SF-1) protein is Selenate reductase subunit B.